A 634-amino-acid polypeptide reads, in one-letter code: Polyadenylate-binding protein 1A (634 aa).

RRM domains follow at residues 11–89, 99–175, 191–268, and 294–370; these read ASLY…WSQR, GNIF…RFKS, TNVY…RAQK, and VNLY…LAQR. In terms of domain architecture, PABC spans 541–618; sequence QEPLTASMLA…AVAVLQAHQA (78 aa).

This sequence belongs to the polyadenylate-binding protein type-1 family. Interacts with ybx1; interaction recruits pabpc1a on C5-methylcytosine (m5C)-containing mRNAs, preventing their degradation.

The protein localises to the cytoplasm. Its function is as follows. Binds the poly(A) tail of mRNA. Prevents mRNA deadenylation and confers poly(A) stability. Binds to N6-methyladenosine (m6A)-containing mRNAs. Stimulates the translation of mRNAs to which it is bound, acting, at least in part, with dazl. Involved in the maternal-to-zygotic transition in early embryo via interaction with ybx1: interaction recruits pabpc1a on C5-methylcytosine (m5C)-containing maternal mRNAs, preventing their degradation. This is Polyadenylate-binding protein 1A from Danio rerio (Zebrafish).